A 298-amino-acid chain; its full sequence is Mitochondrial intermembrane space import and assembly protein 40 (298 aa).

The N-terminal 33 residues, 1–33 (MYRTALRPSQSALRAIRSTTSPSALVSSGARRF), are a transit peptide targeting the mitochondrion. Topologically, residues 34–52 (ASTTSAPKKKSTWKGAAVR) are mitochondrial matrix. The chain crosses the membrane as a helical; Signal-anchor for type II membrane protein span at residues 53 to 69 (WGLAVAAVYYYNTSPIF). Residues 70-298 (SDELPETAGT…TAANNNKKQQ (229 aa)) are Mitochondrial intermembrane-facing. The disordered stretch occupies residues 101-159 (RQAAEHAAARKAAQAAAKAAATPATPSESVEEQITKAEAEAEAVPEGDSKPRSESTEGV). Low complexity predominate over residues 110 to 121 (RKAAQAAAKAAA). 3 disulfide bridges follow: Cys191/Cys193, Cys202/Cys235, and Cys212/Cys225. Residues 199-243 (HGPCGEEFKAAFSCFVYSTEEPKGMDCIEKFSHMQDCFRKYPEVY) enclose the CHCH domain. 2 consecutive short sequence motifs (cx9C motif) follow at residues 202–212 (CGEEFKAAFSC) and 225–235 (CIEKFSHMQDC). The segment at 248–298 (ADDEEAERASAAAPAAEGTPAKEEPVENKKEEALEPATHDATAANNNKKQQ) is disordered. Low complexity predominate over residues 256–266 (ASAAAPAAEGT). Residues 267-280 (PAKEEPVENKKEEA) are compositionally biased toward basic and acidic residues.

As to quaternary structure, monomer. Cu(2+) serves as cofactor. Requires Zn(2+) as cofactor.

It is found in the mitochondrion inner membrane. Functionally, required for the import and folding of small cysteine-containing proteins (small Tim) in the mitochondrial intermembrane space (IMS). Forms a redox cycle with ERV1 that involves a disulfide relay system. Precursor proteins to be imported into the IMS are translocated in their reduced form into the mitochondria. The oxidized form of MIA40 forms a transient intermolecular disulfide bridge with the reduced precursor protein, resulting in oxidation of the precursor protein that now contains an intramolecular disulfide bond and is able to undergo folding in the IMS. The polypeptide is Mitochondrial intermembrane space import and assembly protein 40 (mia-40) (Neurospora crassa (strain ATCC 24698 / 74-OR23-1A / CBS 708.71 / DSM 1257 / FGSC 987)).